The following is a 174-amino-acid chain: Interleukin-10 (174 aa).

The first 16 residues, 1-16 (MPTWMLLFCLLCVTSS), serve as a signal peptide directing secretion. N17 carries an N-linked (GlcNAc...) asparagine glycan. Cystine bridges form between C26/C122 and C76/C128.

Belongs to the IL-10 family. Homodimer. Interacts with IL10RA and IL10RB.

The protein localises to the secreted. Functionally, major immune regulatory cytokine that acts on many cells of the immune system where it has profound anti-inflammatory functions, limiting excessive tissue disruption caused by inflammation. Mechanistically, IL10 binds to its heterotetrameric receptor comprising IL10RA and IL10RB leading to JAK1 and STAT2-mediated phosphorylation of STAT3. In turn, STAT3 translocates to the nucleus where it drives expression of anti-inflammatory mediators. Targets antigen-presenting cells (APCs) such as macrophages and monocytes and inhibits their release of pro-inflammatory cytokines including granulocyte-macrophage colony-stimulating factor /GM-CSF, granulocyte colony-stimulating factor/G-CSF, IL-1 alpha, IL-1 beta, IL-6, IL-8 and TNF-alpha. Also interferes with antigen presentation by reducing the expression of MHC-class II and co-stimulatory molecules, thereby inhibiting their ability to induce T cell activation. In addition, controls the inflammatory response of macrophages by reprogramming essential metabolic pathways including mTOR signaling. This chain is Interleukin-10 (IL10), found in Trichosurus vulpecula (Brush-tailed possum).